A 36-amino-acid chain; its full sequence is Protein P4 (36 aa).

The helical transmembrane segment at 13–33 threads the bilayer; it reads GLQLSLLICACLLAVLIVSFC.

It is found in the host membrane. This chain is Protein P4, found in Vitis vinifera (Grape).